We begin with the raw amino-acid sequence, 573 residues long: DEAD-box ATP-dependent RNA helicase 47A (573 aa).

The Q motif signature appears at 131–159 (KSFEELGLPPLLIDRLNKEGLTAPTEVQS). A Helicase ATP-binding domain is found at 162–362 (IPIISQKHDA…RSWGHDPVLV (201 aa)). ATP is bound at residue 175–182 (SYTGSGKT). The DEAD box signature appears at 293-296 (DEVD). The region spanning 421–565 (TLRRCIHALE…PCEFTEGKLL (145 aa)) is the Helicase C-terminal domain.

This sequence belongs to the DEAD box helicase family.

The enzyme catalyses ATP + H2O = ADP + phosphate + H(+). This is DEAD-box ATP-dependent RNA helicase 47A from Oryza sativa subsp. japonica (Rice).